A 364-amino-acid chain; its full sequence is Dihydroorotate dehydrogenase (quinone) (364 aa).

FMN-binding positions include 61-65 and T85; that span reads AGYDK. Residue K65 participates in substrate binding. Residue 110-114 participates in substrate binding; sequence NRLGF. FMN contacts are provided by N139 and N170. N170 lines the substrate pocket. S173 acts as the Nucleophile in catalysis. Residue N175 coordinates substrate. 2 residues coordinate FMN: K215 and S243. 244–245 is a substrate binding site; sequence NT. FMN is bound by residues G266, G295, and 316–317; that span reads YT.

It belongs to the dihydroorotate dehydrogenase family. Type 2 subfamily. Monomer. FMN is required as a cofactor.

Its subcellular location is the cell membrane. It catalyses the reaction (S)-dihydroorotate + a quinone = orotate + a quinol. It functions in the pathway pyrimidine metabolism; UMP biosynthesis via de novo pathway; orotate from (S)-dihydroorotate (quinone route): step 1/1. In terms of biological role, catalyzes the conversion of dihydroorotate to orotate with quinone as electron acceptor. This Brucella anthropi (strain ATCC 49188 / DSM 6882 / CCUG 24695 / JCM 21032 / LMG 3331 / NBRC 15819 / NCTC 12168 / Alc 37) (Ochrobactrum anthropi) protein is Dihydroorotate dehydrogenase (quinone).